The primary structure comprises 162 residues: Protein hcp1 (162 aa).

This sequence belongs to the hcp1 family. As to quaternary structure, hexamer. Three hcp1 monomers form two closely related hexameric rings with a 40 Angstrom internal diameter.

Its subcellular location is the secreted. Functionally, required for assembly of the protein secretion apparatus HSI-I. Actively secreted during chronic infection of cystic fibrosis patients. The protein is Protein hcp1 (hcp1) of Pseudomonas aeruginosa (strain ATCC 15692 / DSM 22644 / CIP 104116 / JCM 14847 / LMG 12228 / 1C / PRS 101 / PAO1).